The sequence spans 28 residues: Caerulein precursor fragment B1 (28 aa).

Belongs to the gastrin/cholecystokinin family. As to expression, expressed by the skin glands.

The protein resides in the secreted. Its function is as follows. Peptide CPF-B1: Has antimicrobial activity against Gram-negative bacteria E.coli ATCC 25922 (MIC=5 uM) and multidrug-resistant A.baumannii (MIC=4-8 uM), against Gram-positive bacteria S.aureus ATCC 25923 (MIC=5 uM) and methicillin-resistant S.aureus and against fungus C.albicans ATCC 90028 (MIC=25 uM). Has some hemolytic activity against human erythrocytes at high concentrations. The protein is Caerulein precursor fragment B1 of Xenopus borealis (Kenyan clawed frog).